A 488-amino-acid chain; its full sequence is 6-phosphogluconate dehydrogenase, decarboxylating (488 aa).

Residues 9 to 14 (GLAVMG), 32 to 34 (NRT), 74 to 76 (VKA), and Asn102 each bind NADP(+). Substrate-binding positions include Asn102 and 128-130 (SGG). Lys183 (proton acceptor) is an active-site residue. 186–187 (HN) provides a ligand contact to substrate. The active-site Proton donor is the Glu190. Positions 191, 260, 287, 451, and 457 each coordinate substrate.

This sequence belongs to the 6-phosphogluconate dehydrogenase family. As to quaternary structure, homodimer.

The catalysed reaction is 6-phospho-D-gluconate + NADP(+) = D-ribulose 5-phosphate + CO2 + NADPH. The protein operates within carbohydrate degradation; pentose phosphate pathway; D-ribulose 5-phosphate from D-glucose 6-phosphate (oxidative stage): step 3/3. Its function is as follows. Catalyzes the oxidative decarboxylation of 6-phosphogluconate to ribulose 5-phosphate and CO(2), with concomitant reduction of NADP to NADPH. This is 6-phosphogluconate dehydrogenase, decarboxylating (gnd) from Treponema pallidum (strain Nichols).